Reading from the N-terminus, the 62-residue chain is Conotoxin TeAr151 (62 aa).

An N-terminal signal peptide occupies residues 1-22 (MRCLPVFVVLLLLIASAPSVDA). The propeptide occupies 23–47 (QPKTKDDVPLAPLHDNIQNTLQTLR). Methionine 55 is modified (methionine sulfoxide; partial). Serine amide is present on serine 60.

The protein belongs to the conotoxin T superfamily. Contains 2 disulfide bonds. Post-translationally, contains 2 disulfide bonds that can be either 'C1-C3, C2-C4' or 'C1-C4, C2-C3', since these disulfide connectivities have been observed for conotoxins with cysteine framework V (for examples, see AC P0DQQ7 and AC P81755).. In terms of tissue distribution, expressed by the venom duct. Is mostly present in part 5 of the venom duct (distal part near the pharynx), and less abundantly present in part 4 of the venom duct.

The protein resides in the secreted. The polypeptide is Conotoxin TeAr151 (Conus textile (Cloth-of-gold cone)).